Reading from the N-terminus, the 861-residue chain is MQEFYDPKNIESTIQQYWHENNTFTVTEDFSKEKYYCLSMLPYPSGNLHMGHVRNYTIGDVLSRYHRMLGKNVMQPIGWDAFGLPAERAALKNQTAPATWTYANIETMKKQLKQLGFSYDWSREITTCRPEYYRWEQWFFIQLYEKGLVYKKTSFVNWCSNDQTVLANEQVIDGCCWRCGAPIMLKDIPQWFLKITAYADQLLHDLDKLDGWPEQIKNMQRNWIGRSEGINITFQVIDMKETLTIYTTRPDTLMGVTYLSIAINHHLAQQAANNNRLLSDFIEHSRPTKLSEAEIVKVNRVKTGIFTGLYAIHPLTEEKLPIWVTNFVLMDYGTGAIMAVPGHDQRDWDFARQYNLPVKNIIRNIDGSKPTISGIIPEGILYNSGEFNGLRSLEASKIITDILVARGIGETKVNYRLRDWVISRQRYWGTPIPMMTLEDGTVVPTPVDQLPVILPEYLLINSISNPLKDDHLWMKTNYNNNIATRETDTFDTFMESSWYYARYTCPNYDQGMLDTTAANYWLPIDQYIGGIEHAIMHLMYFRFYHKLLRDAGMLTSDEPTIRILCQGMVLADSFYYISCTTGERIWVSPINVRVQRDEKGNIINAIDLQGHHLVYAGTIKMSKSKNNSIDPLTMVEKYGADTIRLFIMFASPVTMALEWRESGVEGANRFLKRLWKLTYDHIQRGKVIKLDLAAMSNDNKILRRELHQTIAKVTDDISRRYAFNTAIAALMEITNKLMHASYHSQQDRAIVQEALLAVVRMLYPFTPHLCFKLWQALNGEGDIDNAPWPIVDQLALVEDTNLIVIQINGRFRSKIIVPVSADKALIIERASKEKLVAKYLEGTKVQKIIYVPGKLLNLVLK.

Positions 42–52 (PYPSGNLHMGH) match the 'HIGH' region motif. Positions 620 to 624 (KMSKS) match the 'KMSKS' region motif. Position 623 (Lys623) interacts with ATP.

Belongs to the class-I aminoacyl-tRNA synthetase family.

Its subcellular location is the cytoplasm. It carries out the reaction tRNA(Leu) + L-leucine + ATP = L-leucyl-tRNA(Leu) + AMP + diphosphate. The polypeptide is Leucine--tRNA ligase (Baumannia cicadellinicola subsp. Homalodisca coagulata).